A 330-amino-acid chain; its full sequence is N-acetyl-gamma-glutamyl-phosphate reductase (330 aa).

Cys143 is an active-site residue.

Belongs to the NAGSA dehydrogenase family. Type 1 subfamily.

Its subcellular location is the cytoplasm. It catalyses the reaction N-acetyl-L-glutamate 5-semialdehyde + phosphate + NADP(+) = N-acetyl-L-glutamyl 5-phosphate + NADPH + H(+). It participates in amino-acid biosynthesis; L-arginine biosynthesis; N(2)-acetyl-L-ornithine from L-glutamate: step 3/4. In terms of biological role, catalyzes the NADPH-dependent reduction of N-acetyl-5-glutamyl phosphate to yield N-acetyl-L-glutamate 5-semialdehyde. This chain is N-acetyl-gamma-glutamyl-phosphate reductase, found in Methanocorpusculum labreanum (strain ATCC 43576 / DSM 4855 / Z).